A 308-amino-acid polypeptide reads, in one-letter code: UDP-N-acetylenolpyruvoylglucosamine reductase (308 aa).

Positions 32 to 196 (VGGPAARLYK…ISAKLQLSPG (165 aa)) constitute an FAD-binding PCMH-type domain. Residue Arg-176 is part of the active site. Ser-225 (proton donor) is an active-site residue. The active site involves Glu-296.

Belongs to the MurB family. It depends on FAD as a cofactor.

It localises to the cytoplasm. The enzyme catalyses UDP-N-acetyl-alpha-D-muramate + NADP(+) = UDP-N-acetyl-3-O-(1-carboxyvinyl)-alpha-D-glucosamine + NADPH + H(+). It functions in the pathway cell wall biogenesis; peptidoglycan biosynthesis. In terms of biological role, cell wall formation. In Legionella pneumophila (strain Lens), this protein is UDP-N-acetylenolpyruvoylglucosamine reductase.